Reading from the N-terminus, the 370-residue chain is Cobalt-precorrin-5B C(1)-methyltransferase (370 aa).

This sequence belongs to the CbiD family.

The enzyme catalyses Co-precorrin-5B + S-adenosyl-L-methionine = Co-precorrin-6A + S-adenosyl-L-homocysteine. Its pathway is cofactor biosynthesis; adenosylcobalamin biosynthesis; cob(II)yrinate a,c-diamide from sirohydrochlorin (anaerobic route): step 6/10. Functionally, catalyzes the methylation of C-1 in cobalt-precorrin-5B to form cobalt-precorrin-6A. In Pseudomonas syringae pv. tomato (strain ATCC BAA-871 / DC3000), this protein is Cobalt-precorrin-5B C(1)-methyltransferase.